Here is a 473-residue protein sequence, read N- to C-terminus: MRNSLSFQDEPIVALATPLGVGALAVVRMSGQGVFDIARKVFHKQGAPDFHLASSKGFQAHFGTIHDAQGVVDEVIALVFRSPRSFTMEDMVEFSCHGGPVVVQHLLKALIDAGCRLAEPGEFTRRAFLNGRIDLLQAEAIGEMIHARSESAFRTAVTQMQGRLSRQLEEMREKLLHSCALLELELDFSEEDVEFQNREELREDVQRLQGEINRLLDSYQHGRLLKEGVATVLVGSPNAGKSTLLNALLGEERSIVSHQPGTTRDYIEEPLLLGSTLFRLIDTAGLREGEEEVEHEGIRRSYRKIAEADVVLYLLDVSHPDYCNELSDITSLLEQASPNVQLLLVANKCDAITNPTERLAQLQAAMPQATVCGIAAKEGDGLEALKQQMSNMVAGLDKLHEASVLITSMRHYEALRRASDALENGACLVAEHAETELVAFELRSALEAVGEITGKVVNDEILSLIFERFCIGK.

(6S)-5-formyl-5,6,7,8-tetrahydrofolate-binding residues include R28, E93, and R132. One can recognise a TrmE-type G domain in the interval 228-394; sequence GVATVLVGSP…LKQQMSNMVA (167 aa). GTP is bound by residues 238–243, 257–263, and 282–285; these read NAGKST, SHQPGTT, and DTAG. Mg(2+)-binding residues include S242 and T263. K473 is a (6S)-5-formyl-5,6,7,8-tetrahydrofolate binding site.

It belongs to the TRAFAC class TrmE-Era-EngA-EngB-Septin-like GTPase superfamily. TrmE GTPase family. Homodimer. Heterotetramer of two MnmE and two MnmG subunits. K(+) is required as a cofactor.

The protein resides in the cytoplasm. Exhibits a very high intrinsic GTPase hydrolysis rate. Involved in the addition of a carboxymethylaminomethyl (cmnm) group at the wobble position (U34) of certain tRNAs, forming tRNA-cmnm(5)s(2)U34. The protein is tRNA modification GTPase MnmE of Chlorobium chlorochromatii (strain CaD3).